We begin with the raw amino-acid sequence, 51 residues long: Large ribosomal subunit protein bL33 (51 aa).

The tract at residues 1 to 21 (MRDKIKLESGAGTGHFYTTTK) is disordered.

The protein belongs to the bacterial ribosomal protein bL33 family.

The chain is Large ribosomal subunit protein bL33 from Neisseria gonorrhoeae (strain ATCC 700825 / FA 1090).